The sequence spans 138 residues: Large ribosomal subunit protein uL16 (138 aa).

Over residues 1 to 17 (MLIPRKVKHRKQHHPRQ) the composition is skewed to basic residues. Residues 1-22 (MLIPRKVKHRKQHHPRQRGIAS) are disordered.

The protein belongs to the universal ribosomal protein uL16 family. As to quaternary structure, part of the 50S ribosomal subunit.

Binds 23S rRNA and is also seen to make contacts with the A and possibly P site tRNAs. This chain is Large ribosomal subunit protein uL16, found in Mycobacterium leprae (strain Br4923).